A 450-amino-acid polypeptide reads, in one-letter code: Protein tailless (450 aa).

The nuclear receptor DNA-binding region spans 31–108; that stretch reads HVPCKVCRDH…VGMNKDAVQH (78 aa). 2 consecutive NR C4-type zinc fingers follow at residues 34-54 and 70-96; these read CKVC…CDGC and CKSQ…LRKC. Residues 187–448 enclose the NR LBD domain; it reads VPRVPHHPVH…RLISDMYSQR (262 aa).

This sequence belongs to the nuclear hormone receptor family. NR2 subfamily. Monomer.

Its subcellular location is the nucleus. Its function is as follows. Orphan receptor that binds DNA as a monomer to hormone response elements (HRE) containing an extended core motif half-site sequence 5'-AAGTCA-3' in which the 5' flanking nucleotides participate in determining receptor specificity. This receptor binds to the consensus sequence [AG][AG]AAGTCAA. Plays a key role in the establishment of non-metameric domains at the anterior and posterior poles of the embryo. It may also play a role in the nervous system. The maternal terminal pathway activates the tll gene in the termini; TLL activity then represses segmentation and activates terminal-specific genes in these domains. Involved in the regulation of early eye development. In the embryonic visual system anlage drives cells to optic lobe as opposed to Bolwig's organ fate. The chain is Protein tailless (tll) from Drosophila virilis (Fruit fly).